Here is a 331-residue protein sequence, read N- to C-terminus: uncharacterized protein (331 aa).

To bacterial alkanal monooxygenase alpha and beta chains.

This is an uncharacterized protein from Bacillus subtilis (strain 168).